The chain runs to 736 residues: Elongation factor 2 (736 aa).

The region spanning Thr-18–Lys-234 is the tr-type G domain. Residues Ala-27 to Thr-34, Asp-93 to His-97, and Asn-147 to Asp-150 contribute to the GTP site. At His-603 the chain carries Diphthamide.

It belongs to the TRAFAC class translation factor GTPase superfamily. Classic translation factor GTPase family. EF-G/EF-2 subfamily.

Its subcellular location is the cytoplasm. Its function is as follows. Catalyzes the GTP-dependent ribosomal translocation step during translation elongation. During this step, the ribosome changes from the pre-translocational (PRE) to the post-translocational (POST) state as the newly formed A-site-bound peptidyl-tRNA and P-site-bound deacylated tRNA move to the P and E sites, respectively. Catalyzes the coordinated movement of the two tRNA molecules, the mRNA and conformational changes in the ribosome. The chain is Elongation factor 2 (fusA) from Saccharolobus solfataricus (strain ATCC 35092 / DSM 1617 / JCM 11322 / P2) (Sulfolobus solfataricus).